The primary structure comprises 464 residues: NADH-quinone oxidoreductase subunit N (464 aa).

13 helical membrane passes run 5–25, 31–51, 63–83, 96–116, 117–137, 152–172, 188–208, 242–262, 286–303, 312–332, 358–378, 393–415, and 436–456; these read MLLA…VLFL, LLSA…PASL, LFAR…CLLS, EYAA…ASTS, LVSL…LIAV, LLPG…VYAA, GAPM…AAAF, VFAV…RPLL, MLAY…LAVL, AGLF…GLLA, AVLL…AGFM, VGLV…RPVL, and LIFV…GPFF.

It belongs to the complex I subunit 2 family. As to quaternary structure, NDH-1 is composed of 14 different subunits. Subunits NuoA, H, J, K, L, M, N constitute the membrane sector of the complex.

It localises to the cell inner membrane. It catalyses the reaction a quinone + NADH + 5 H(+)(in) = a quinol + NAD(+) + 4 H(+)(out). Functionally, NDH-1 shuttles electrons from NADH, via FMN and iron-sulfur (Fe-S) centers, to quinones in the respiratory chain. The immediate electron acceptor for the enzyme in this species is believed to be ubiquinone. Couples the redox reaction to proton translocation (for every two electrons transferred, four hydrogen ions are translocated across the cytoplasmic membrane), and thus conserves the redox energy in a proton gradient. This is NADH-quinone oxidoreductase subunit N from Syntrophotalea carbinolica (strain DSM 2380 / NBRC 103641 / GraBd1) (Pelobacter carbinolicus).